A 390-amino-acid chain; its full sequence is Glucose-fructose oxidoreductase domain-containing protein 1 (390 aa).

Positions 1–21 are cleaved as a signal peptide; that stretch reads MLPGVGVFGTSLTARVIIPLL.

The protein belongs to the Gfo/Idh/MocA family. As to quaternary structure, homodimer. Interacts with NKIRAS2.

It is found in the secreted. In terms of biological role, probably catalytically inactive enzyme. Does not bind NAD or NADP. This Mus musculus (Mouse) protein is Glucose-fructose oxidoreductase domain-containing protein 1 (Gfod1).